We begin with the raw amino-acid sequence, 456 residues long: Bifunctional protein GlmU (456 aa).

The pyrophosphorylase stretch occupies residues 1–229 (MLNNTMSVVI…ISETDGVNNR (229 aa)). UDP-N-acetyl-alpha-D-glucosamine contacts are provided by residues 11–14 (LAAG), K25, Q76, 81–82 (GT), 103–105 (YGD), G140, E154, N169, and N227. D105 contacts Mg(2+). Mg(2+) is bound at residue N227. The segment at 230–250 (LQLSRLERIYQAEQAEKLLLA) is linker. Residues 251-456 (GVMLRDPARF…QGWQRPVKKK (206 aa)) form an N-acetyltransferase region. R333 and K351 together coordinate UDP-N-acetyl-alpha-D-glucosamine. Residue H363 is the Proton acceptor of the active site. UDP-N-acetyl-alpha-D-glucosamine-binding residues include Y366 and N377. Residues A380, 386–387 (NY), S405, A423, and R440 each bind acetyl-CoA.

In the N-terminal section; belongs to the N-acetylglucosamine-1-phosphate uridyltransferase family. The protein in the C-terminal section; belongs to the transferase hexapeptide repeat family. In terms of assembly, homotrimer. Mg(2+) serves as cofactor.

Its subcellular location is the cytoplasm. It carries out the reaction alpha-D-glucosamine 1-phosphate + acetyl-CoA = N-acetyl-alpha-D-glucosamine 1-phosphate + CoA + H(+). It catalyses the reaction N-acetyl-alpha-D-glucosamine 1-phosphate + UTP + H(+) = UDP-N-acetyl-alpha-D-glucosamine + diphosphate. It functions in the pathway nucleotide-sugar biosynthesis; UDP-N-acetyl-alpha-D-glucosamine biosynthesis; N-acetyl-alpha-D-glucosamine 1-phosphate from alpha-D-glucosamine 6-phosphate (route II): step 2/2. It participates in nucleotide-sugar biosynthesis; UDP-N-acetyl-alpha-D-glucosamine biosynthesis; UDP-N-acetyl-alpha-D-glucosamine from N-acetyl-alpha-D-glucosamine 1-phosphate: step 1/1. Its pathway is bacterial outer membrane biogenesis; LPS lipid A biosynthesis. Catalyzes the last two sequential reactions in the de novo biosynthetic pathway for UDP-N-acetylglucosamine (UDP-GlcNAc). The C-terminal domain catalyzes the transfer of acetyl group from acetyl coenzyme A to glucosamine-1-phosphate (GlcN-1-P) to produce N-acetylglucosamine-1-phosphate (GlcNAc-1-P), which is converted into UDP-GlcNAc by the transfer of uridine 5-monophosphate (from uridine 5-triphosphate), a reaction catalyzed by the N-terminal domain. This chain is Bifunctional protein GlmU, found in Enterobacter sp. (strain 638).